The primary structure comprises 151 residues: Nucleoside diphosphate kinase (151 aa).

The ATP site is built by lysine 11, phenylalanine 59, arginine 87, threonine 93, arginine 104, and asparagine 114. The Pros-phosphohistidine intermediate role is filled by histidine 117.

Belongs to the NDK family. In terms of assembly, homotetramer. It depends on Mg(2+) as a cofactor.

The protein resides in the cytoplasm. It carries out the reaction a 2'-deoxyribonucleoside 5'-diphosphate + ATP = a 2'-deoxyribonucleoside 5'-triphosphate + ADP. It catalyses the reaction a ribonucleoside 5'-diphosphate + ATP = a ribonucleoside 5'-triphosphate + ADP. Major role in the synthesis of nucleoside triphosphates other than ATP. The ATP gamma phosphate is transferred to the NDP beta phosphate via a ping-pong mechanism, using a phosphorylated active-site intermediate. This Prochlorococcus marinus (strain NATL2A) protein is Nucleoside diphosphate kinase.